A 143-amino-acid polypeptide reads, in one-letter code: Ribosome-binding factor A (143 aa).

Residues 123–143 are disordered; it reads DNSLQENYKDSDKETKVEKLR.

The protein belongs to the RbfA family. In terms of assembly, monomer. Binds 30S ribosomal subunits, but not 50S ribosomal subunits or 70S ribosomes.

Its subcellular location is the cytoplasm. One of several proteins that assist in the late maturation steps of the functional core of the 30S ribosomal subunit. Associates with free 30S ribosomal subunits (but not with 30S subunits that are part of 70S ribosomes or polysomes). Required for efficient processing of 16S rRNA. May interact with the 5'-terminal helix region of 16S rRNA. The protein is Ribosome-binding factor A of Francisella philomiragia subsp. philomiragia (strain ATCC 25017 / CCUG 19701 / FSC 153 / O#319-036).